The following is an 884-amino-acid chain: Valine--tRNA ligase (884 aa).

A 'HIGH' region motif is present at residues 47–57 (PNVTGALHIGH). The short motif at 525-529 (KMSKS) is the 'KMSKS' region element. Lys-528 lines the ATP pocket. A coiled-coil region spans residues 812–884 (AVDFEAELAR…QQRFRDAIGK (73 aa)).

The protein belongs to the class-I aminoacyl-tRNA synthetase family. ValS type 1 subfamily. As to quaternary structure, monomer.

It localises to the cytoplasm. It catalyses the reaction tRNA(Val) + L-valine + ATP = L-valyl-tRNA(Val) + AMP + diphosphate. Functionally, catalyzes the attachment of valine to tRNA(Val). As ValRS can inadvertently accommodate and process structurally similar amino acids such as threonine, to avoid such errors, it has a 'posttransfer' editing activity that hydrolyzes mischarged Thr-tRNA(Val) in a tRNA-dependent manner. The sequence is that of Valine--tRNA ligase from Nitratidesulfovibrio vulgaris (strain ATCC 29579 / DSM 644 / CCUG 34227 / NCIMB 8303 / VKM B-1760 / Hildenborough) (Desulfovibrio vulgaris).